Reading from the N-terminus, the 445-residue chain is Cyclin-B1-2 (445 aa).

The protein belongs to the cyclin family. Cyclin AB subfamily. As to quaternary structure, interacts with FZR2/CCS52A1, FZR1/CCS52A2 and FZR3/CCS52B. In terms of tissue distribution, expressed in roots, stems and flowers.

Its function is as follows. May induce mitotic cell division. In Arabidopsis thaliana (Mouse-ear cress), this protein is Cyclin-B1-2 (CYCB1-2).